Here is an 88-residue protein sequence, read N- to C-terminus: Small ribosomal subunit protein uS15 (88 aa).

Belongs to the universal ribosomal protein uS15 family. Part of the 30S ribosomal subunit. Forms a bridge to the 50S subunit in the 70S ribosome, contacting the 23S rRNA.

Its function is as follows. One of the primary rRNA binding proteins, it binds directly to 16S rRNA where it helps nucleate assembly of the platform of the 30S subunit by binding and bridging several RNA helices of the 16S rRNA. Forms an intersubunit bridge (bridge B4) with the 23S rRNA of the 50S subunit in the ribosome. This is Small ribosomal subunit protein uS15 from Mycoplasmopsis agalactiae (strain NCTC 10123 / CIP 59.7 / PG2) (Mycoplasma agalactiae).